A 245-amino-acid chain; its full sequence is 1-(5-phosphoribosyl)-5-[(5-phosphoribosylamino)methylideneamino] imidazole-4-carboxamide isomerase (245 aa).

Aspartate 7 acts as the Proton acceptor in catalysis. Aspartate 129 serves as the catalytic Proton donor.

Belongs to the HisA/HisF family.

It is found in the cytoplasm. The enzyme catalyses 1-(5-phospho-beta-D-ribosyl)-5-[(5-phospho-beta-D-ribosylamino)methylideneamino]imidazole-4-carboxamide = 5-[(5-phospho-1-deoxy-D-ribulos-1-ylimino)methylamino]-1-(5-phospho-beta-D-ribosyl)imidazole-4-carboxamide. The protein operates within amino-acid biosynthesis; L-histidine biosynthesis; L-histidine from 5-phospho-alpha-D-ribose 1-diphosphate: step 4/9. The chain is 1-(5-phosphoribosyl)-5-[(5-phosphoribosylamino)methylideneamino] imidazole-4-carboxamide isomerase from Escherichia coli (strain ATCC 8739 / DSM 1576 / NBRC 3972 / NCIMB 8545 / WDCM 00012 / Crooks).